The following is a 2138-amino-acid chain: Conidial yellow pigment biosynthesis polyketide synthase melA (2138 aa).

Residues 8 to 244 (YLFGDQTADF…TRVPIHGPYH (237 aa)) form an N-terminal acylcarrier protein transacylase domain (SAT) region. Positions 373 to 804 (QSKIAIIGLS…GGNTALMVED (432 aa)) constitute a Ketosynthase family 3 (KS3) domain. Residues cysteine 545, histidine 680, and histidine 722 each act as for beta-ketoacyl synthase activity in the active site. The segment at 910-1229 (FVFTGQGAQY…VSALYMAGIE (320 aa)) is malonyl-CoA:ACP transacylase (MAT) domain. Residue serine 999 is the For acyl/malonyl transferase activity of the active site. The segment at 1288–1601 (SSAAQRVLET…RKILDMALPP (314 aa)) is product template (PT) domain. The segment at 1292 to 1423 (QRVLETSGDN…CNIKFFDPSP (132 aa)) is N-terminal hotdog fold. In terms of domain architecture, PKS/mFAS DH spans 1292–1596 (QRVLETSGDN…FQGLARKILD (305 aa)). Histidine 1324 functions as the Proton acceptor; for dehydratase activity in the catalytic mechanism. Residues 1451–1596 (AHRMKRGMVY…FQGLARKILD (146 aa)) form a C-terminal hotdog fold region. Aspartate 1509 acts as the Proton donor; for dehydratase activity in catalysis. Positions 1640–1714 (PSMATRALAI…DFKHLLAQMG (75 aa)) constitute a Carrier 1 domain. An O-(pantetheine 4'-phosphoryl)serine modification is found at serine 1674. A disordered region spans residues 1712–1758 (QMGPGESSDGSSSEGDMSSAASSTDLSSPNTSGLPTPANEKSMTHGL). A compositionally biased stretch (low complexity) spans 1713–1739 (MGPGESSDGSSSEGDMSSAASSTDLSS). Residues 1740-1758 (PNTSGLPTPANEKSMTHGL) are compositionally biased toward polar residues. The 78-residue stretch at 1759-1836 (QGQNDSMRQI…DIETTLDLKP (78 aa)) folds into the Carrier 2 domain. Serine 1796 is modified (O-(pantetheine 4'-phosphoryl)serine). A claisen cyclase domain region spans residues 1863–2135 (TQHPPATSIL…ELARFIANSM (273 aa)). The For Claisen cyclase activity role is filled by serine 1953.

It carries out the reaction 6 malonyl-CoA + acetyl-CoA + 6 H(+) = naphtopyrone YWA1 + 6 CO2 + 7 CoA + H2O. It participates in pigment biosynthesis. It functions in the pathway polyketide biosynthesis; heptaketide naphthopyrone YWA1 biosynthesis. In terms of biological role, non-reducing polyketide synthase involved in the biosynthesis of a yellow conidial pigment. Probably forms the heptaketide naphthopyrene YWA1 via condensation of acetate units. This Penicillium expansum (Blue mold rot fungus) protein is Conidial yellow pigment biosynthesis polyketide synthase melA.